A 342-amino-acid polypeptide reads, in one-letter code: S-adenosylmethionine:tRNA ribosyltransferase-isomerase (342 aa).

Belongs to the QueA family. Monomer.

The protein resides in the cytoplasm. It carries out the reaction 7-aminomethyl-7-carbaguanosine(34) in tRNA + S-adenosyl-L-methionine = epoxyqueuosine(34) in tRNA + adenine + L-methionine + 2 H(+). It functions in the pathway tRNA modification; tRNA-queuosine biosynthesis. In terms of biological role, transfers and isomerizes the ribose moiety from AdoMet to the 7-aminomethyl group of 7-deazaguanine (preQ1-tRNA) to give epoxyqueuosine (oQ-tRNA). The sequence is that of S-adenosylmethionine:tRNA ribosyltransferase-isomerase from Streptococcus agalactiae serotype III (strain NEM316).